The following is a 142-amino-acid chain: E1B protein, small T-antigen (142 aa).

The protein belongs to the adenoviridae E1B 19 kDa protein family.

The protein localises to the host cell membrane. It localises to the host nucleus envelope. It is found in the host nucleus lamina. Its function is as follows. Putative adenovirus Bcl-2 homolog that inhibits apoptosis induced by TNF or FAS pathways, as well as p53-mediated apoptosis. Without E1B 19K function, virus production is compromised because of premature death of host cell. Interacts with Bax protein in cell lysates. This Homo sapiens (Human) protein is E1B protein, small T-antigen.